A 794-amino-acid polypeptide reads, in one-letter code: MTDEKHVYVPPPKDPPSYEEVALHSALNNSAPPNDGEQNETSMEEMEIIEPPSEDSSRFPLLRTKLAAIHEGWESACHSFEIRFASTFHRIPFQFLYLAVIATVIILASYYGYFDGVPAWRSVHHYGEDVLLNYIKGCDISDTRQQVMTLSSIPHLAGTVGDSSLLQMIMNRLYYEKGTIVDFREFYAYLNFPQLVSLSIDGDDSFHPSLIESYQVGGYDGVSIPTPATFGGSPSGFVNAPLVYANRGRIEDFEWLVNSGIYVESSIVLVRANQSDFALATANAEKYNASAILIFEDTYLTSLDNLNQVYPAGPYPSANSLYRGSVANHYYYVGDPLTPGWSAHEETNRISPKDANVLPSIVSIPITFNDGIELLKRLQGHGHLVKDSNWCQDLAPVLSEVWTGSKISSPGLEVNVLQDIEDKQKIINIMAQIDGYESDQILVVGAPRDSWCTGASDSSVGTSLLIDVISTFANMAQDLSWKPRRTIVFASWDARQFNAIGSTEFLEYWKESLEAKAVAYINVDVAVSGDTFTARTVPGLKKVIQRAFDVANEEDEMKAANIITDDFDYTSDLTSFLTFAGIPVVNLAFERNEENPTPMPFLGSCEDTVSWIDTFGSEYWENAARLGKIWSYLILFLANDPVVPYDLEDEINGVGEMLKRIPEIPGANALDLRKINEEFSELLESLIRFEDEIREWKSLMMHNSYTVSVKKHPELEGYNAKLARFERSFLDEAGLPGHEWYKHLIYGPNLRNSHSQLFPSIFDALLYGDVEAAQKEVKRIALALDRAHNEIRFA.

The interval 1–56 is disordered; sequence MTDEKHVYVPPPKDPPSYEEVALHSALNNSAPPNDGEQNETSMEEMEIIEPPSEDS. Residues 91 to 111 traverse the membrane as a helical segment; the sequence is IPFQFLYLAVIATVIILASYY.

Belongs to the peptidase M28 family. M28B subfamily.

The protein localises to the membrane. This Schizosaccharomyces pombe (strain 972 / ATCC 24843) (Fission yeast) protein is Inactive zinc metalloprotease C354.09c.